The primary structure comprises 62 residues: Cytotoxin-like basic protein (62 aa).

Disulfide bonds link Cys3–Cys22, Cys15–Cys40, Cys44–Cys55, and Cys56–Cys61.

Belongs to the three-finger toxin family. Short-chain subfamily. Orphan group XV sub-subfamily. In terms of tissue distribution, expressed by the venom gland.

It localises to the secreted. It is found in the target cell membrane. Its function is as follows. Has low cytotoxic activity. This chain is Cytotoxin-like basic protein, found in Naja naja (Indian cobra).